We begin with the raw amino-acid sequence, 416 residues long: Ribosome biogenesis protein WDR12 homolog (416 aa).

The tract at residues 7 to 89 (VQVRFFTKQK…ESVVEIEYLE (83 aa)) is ubiquitin-like (UBL) domain. WD repeat units lie at residues 101-138 (VHDDWVSSVSRCKNCIITGSYDNCVQIWDDQGSCLAKV), 140-184 (GHTS…ASCV), 189-228 (GHTQSVDSISINPSATKFCSGSWDKTLKLWSAVVNPEGGD), 259-297 (GHTQAVSSVVWMDRTTICSAGWDHCIRLWDAESGVNKQT), 299-338 (TGSKVFCEIAYSALNQCLASGSADKYIRLWDHRAEDGQVV), 344-384 (SHQG…TPLY), and 388-416 (GHQDKVMCVRWSSSRHLMSGGTDNQLILY). The disordered stretch occupies residues 226–245 (GGDEGENGSLSKKQKTTGVK).

The protein belongs to the WD repeat WDR12/YTM1 family.

It localises to the nucleus. The protein resides in the nucleolus. The protein localises to the nucleoplasm. Functionally, required for maturation of ribosomal RNAs and formation of the large ribosomal subunit. This chain is Ribosome biogenesis protein WDR12 homolog, found in Nematostella vectensis (Starlet sea anemone).